Consider the following 238-residue polypeptide: NAD-dependent protein deacylase (238 aa).

The region spanning 1-237 (MRGIMKVFVL…PAWVERLLAR (237 aa)) is the Deacetylase sirtuin-type domain. 12-31 (GAGVSAESGLGTFRDKDGVW) is an NAD(+) binding site. The substrate site is built by Tyr-56 and Arg-59. NAD(+) is bound at residue 94–97 (QNVD). The active-site Proton acceptor is His-112. The Zn(2+) site is built by Cys-120, Cys-123, Cys-139, and Cys-142. NAD(+) is bound by residues 179-181 (GTS), 205-207 (NLE), and Ala-223.

It belongs to the sirtuin family. Class III subfamily. Zn(2+) serves as cofactor.

It localises to the cytoplasm. It carries out the reaction N(6)-acetyl-L-lysyl-[protein] + NAD(+) + H2O = 2''-O-acetyl-ADP-D-ribose + nicotinamide + L-lysyl-[protein]. The enzyme catalyses N(6)-succinyl-L-lysyl-[protein] + NAD(+) + H2O = 2''-O-succinyl-ADP-D-ribose + nicotinamide + L-lysyl-[protein]. NAD-dependent lysine deacetylase and desuccinylase that specifically removes acetyl and succinyl groups on target proteins. Modulates the activities of several proteins which are inactive in their acylated form. This Caulobacter vibrioides (strain ATCC 19089 / CIP 103742 / CB 15) (Caulobacter crescentus) protein is NAD-dependent protein deacylase.